A 620-amino-acid chain; its full sequence is MSEVSGDYNSDSDESLSLQPKRTKSGKLHNANADTLFEVSSKLSPNTDRDPGNVGNVPLEPTRTRKGDLVPVGKNHEVPDLQRQDVSVGVFKGPPTRTGTQLPTKIDPEQKTPDIRSEKLRKSVEEEALPPSKMTKSEKKQKESIKEKSTEPYEVTKPKFPDRKLRKSTEEADLKPHFKSTEQSGTEQPEQTKFPDKKLRQSTKKKVSGPLEDFEEESRRPIDEASLELSQKRPLKASKKAQKSSFDEKFPEMLEQITVELLDDQEETQEESIKEKVPEPLGDRKPSAQKHKLRKSSERSKLKDTLIEPSKDKDPGLQTQTEFPKEKLIKTTEKTGDKPQQITDPDIQEKSQPEPTEKNLELPNKPKPEEERDLPKEDKPESSKPNYPAGKDKLALPAKIKTEFIVGSPRESVESFSTLYETQEFLKDLQTDMNELFPIVDASESQTELRDSTVLPQEVELLGRKETKPSLTPEFEHLTWSPERVAEWISDLGFPQYKECFTENFINGQKLIHVNCSNLPQMGITDFEDMKAISYHTRVLLGIEEPLFSRSISLPYRDNKGLFFEQKGHSGVKSDSLTLAKFVEAAGLQEYNPEIKAEEKKEDALPENSLEENEELYEAT.

Positions 1–394 are disordered; that stretch reads MSEVSGDYNS…PNYPAGKDKL (394 aa). Basic and acidic residues-rich tracts occupy residues 62–83, 106–125, and 135–180; these read TRTRKGDLVPVGKNHEVPDLQR, IDPEQKTPDIRSEKLRKSVE, and TKSE…HFKS. Over residues 181–191 the composition is skewed to polar residues; it reads TEQSGTEQPEQ. The span at 233–242 shows a compositional bias: basic residues; it reads RPLKASKKAQ. Residues 261-270 are compositionally biased toward acidic residues; that stretch reads LLDDQEETQE. Composition is skewed to basic and acidic residues over residues 271–286, 295–315, 323–337, and 347–382; these read ESIKEKVPEPLGDRKP, KSSERSKLKDTLIEPSKDKDP, FPKEKLIKTTEKTGD, and IQEKSQPEPTEKNLELPNKPKPEEERDLPKEDKPES. The 64-residue stretch at 480 to 543 folds into the SAM domain; sequence WSPERVAEWI…SYHTRVLLGI (64 aa). Residues 594–604 show a composition bias toward basic and acidic residues; that stretch reads EIKAEEKKEDA. A disordered region spans residues 594 to 620; it reads EIKAEEKKEDALPENSLEENEELYEAT. The segment covering 609–620 has biased composition (acidic residues); sequence SLEENEELYEAT.

This Mus musculus (Mouse) protein is Sterile alpha motif domain-containing protein 15 (Samd15).